Reading from the N-terminus, the 170-residue chain is MEKLEKLISTYENYPKAGVSFKDVIEIVQHPSIFRQLILEMAKSKIIKEAEALISIDARGFIFGSAISIQAAKPMIVARKPGKLPGELVTKKYSLEYGENSLSIQKKALKKYNSFAIIDDLLATGGTVNCVSELINNNNKKVVGLLVVAELSKFDGRSRFNFPVESSILF.

The protein belongs to the purine/pyrimidine phosphoribosyltransferase family. In terms of assembly, homodimer.

The protein resides in the cytoplasm. The enzyme catalyses AMP + diphosphate = 5-phospho-alpha-D-ribose 1-diphosphate + adenine. It functions in the pathway purine metabolism; AMP biosynthesis via salvage pathway; AMP from adenine: step 1/1. In terms of biological role, catalyzes a salvage reaction resulting in the formation of AMP, that is energically less costly than de novo synthesis. The sequence is that of Adenine phosphoribosyltransferase from Prochlorococcus marinus (strain MIT 9312).